Here is a 292-residue protein sequence, read N- to C-terminus: 4-hydroxy-tetrahydrodipicolinate synthase (292 aa).

Residue Thr44 participates in pyruvate binding. Residue Tyr132 is the Proton donor/acceptor of the active site. The Schiff-base intermediate with substrate role is filled by Lys161. Ile203 provides a ligand contact to pyruvate.

The protein belongs to the DapA family. As to quaternary structure, homotetramer.

It is found in the cytoplasm. The enzyme catalyses L-aspartate 4-semialdehyde + pyruvate = (2S,4S)-4-hydroxy-2,3,4,5-tetrahydrodipicolinate + H2O + H(+). Its pathway is amino-acid biosynthesis; L-lysine biosynthesis via DAP pathway; (S)-tetrahydrodipicolinate from L-aspartate: step 3/4. Is feedback inhibited by lysine. Is competitively inhibited by 2-oxobutyrate with respect to pyruvate. Catalyzes the condensation of (S)-aspartate-beta-semialdehyde [(S)-ASA] and pyruvate to 4-hydroxy-tetrahydrodipicolinate (HTPA). This is 4-hydroxy-tetrahydrodipicolinate synthase from Rhizobium meliloti (Ensifer meliloti).